A 461-amino-acid polypeptide reads, in one-letter code: Tubulin gamma chain (461 aa).

142–148 (AGGTGSG) is a binding site for GTP.

The protein belongs to the tubulin family.

The protein localises to the cytoplasm. The protein resides in the cytoskeleton. It localises to the microtubule organizing center. Its subcellular location is the spindle pole body. Functionally, tubulin is the major constituent of microtubules. The gamma chain is found at microtubule organizing centers (MTOC) such as the spindle poles or the centrosome, suggesting that it is involved in the minus-end nucleation of microtubule assembly. This chain is Tubulin gamma chain (tbg), found in Neurospora crassa (strain ATCC 24698 / 74-OR23-1A / CBS 708.71 / DSM 1257 / FGSC 987).